A 410-amino-acid polypeptide reads, in one-letter code: 2,3-bisphosphoglycerate-independent phosphoglycerate mutase (410 aa).

This sequence belongs to the BPG-independent phosphoglycerate mutase family. A-PGAM subfamily.

It catalyses the reaction (2R)-2-phosphoglycerate = (2R)-3-phosphoglycerate. It participates in carbohydrate degradation; glycolysis; pyruvate from D-glyceraldehyde 3-phosphate: step 3/5. In terms of biological role, catalyzes the interconversion of 2-phosphoglycerate and 3-phosphoglycerate. This chain is 2,3-bisphosphoglycerate-independent phosphoglycerate mutase, found in Pyrococcus abyssi (strain GE5 / Orsay).